Reading from the N-terminus, the 471-residue chain is Ribulose bisphosphate carboxylase large chain (471 aa).

Residues Asn115 and Thr165 each contribute to the substrate site. Catalysis depends on Lys167, which acts as the Proton acceptor. A substrate-binding site is contributed by Lys169. Mg(2+)-binding residues include Lys193, Asp195, and Glu196. Position 193 is an N6-carboxylysine (Lys193). His286 functions as the Proton acceptor in the catalytic mechanism. Substrate is bound by residues Arg287, His319, and Ser371.

It belongs to the RuBisCO large chain family. Type I subfamily. As to quaternary structure, heterohexadecamer of 8 large chains and 8 small chains. The cofactor is Mg(2+).

It is found in the carboxysome. It carries out the reaction 2 (2R)-3-phosphoglycerate + 2 H(+) = D-ribulose 1,5-bisphosphate + CO2 + H2O. It catalyses the reaction D-ribulose 1,5-bisphosphate + O2 = 2-phosphoglycolate + (2R)-3-phosphoglycerate + 2 H(+). RuBisCO catalyzes two reactions: the carboxylation of D-ribulose 1,5-bisphosphate, the primary event in carbon dioxide fixation, as well as the oxidative fragmentation of the pentose substrate in the photorespiration process. Both reactions occur simultaneously and in competition at the same active site. The chain is Ribulose bisphosphate carboxylase large chain from Prochlorococcus marinus (strain MIT 9301).